Consider the following 668-residue polypeptide: Biosynthetic arginine decarboxylase (668 aa).

Lys-105 is subject to N6-(pyridoxal phosphate)lysine. Leu-286–Tyr-296 contacts substrate.

The protein belongs to the Orn/Lys/Arg decarboxylase class-II family. SpeA subfamily. It depends on Mg(2+) as a cofactor. Pyridoxal 5'-phosphate is required as a cofactor.

It carries out the reaction L-arginine + H(+) = agmatine + CO2. Catalyzes the biosynthesis of agmatine from arginine. This chain is Biosynthetic arginine decarboxylase, found in Rhodopirellula baltica (strain DSM 10527 / NCIMB 13988 / SH1).